We begin with the raw amino-acid sequence, 485 residues long: ATP synthase subunit beta (485 aa).

Glycine 170–threonine 177 lines the ATP pocket.

This sequence belongs to the ATPase alpha/beta chains family. As to quaternary structure, F-type ATPases have 2 components, CF(1) - the catalytic core - and CF(0) - the membrane proton channel. CF(1) has five subunits: alpha(3), beta(3), gamma(1), delta(1), epsilon(1). CF(0) has three main subunits: a(1), b(2) and c(9-12). The alpha and beta chains form an alternating ring which encloses part of the gamma chain. CF(1) is attached to CF(0) by a central stalk formed by the gamma and epsilon chains, while a peripheral stalk is formed by the delta and b chains.

The protein localises to the cell membrane. The catalysed reaction is ATP + H2O + 4 H(+)(in) = ADP + phosphate + 5 H(+)(out). Produces ATP from ADP in the presence of a proton gradient across the membrane. The catalytic sites are hosted primarily by the beta subunits. This Salinispora arenicola (strain CNS-205) protein is ATP synthase subunit beta.